A 253-amino-acid polypeptide reads, in one-letter code: Sulfate transporter CysZ (253 aa).

Transmembrane regions (helical) follow at residues F31 to F51, L75 to I95, I151 to W171, and I222 to V242.

The protein belongs to the CysZ family.

Its subcellular location is the cell inner membrane. In terms of biological role, high affinity, high specificity proton-dependent sulfate transporter, which mediates sulfate uptake. Provides the sulfur source for the cysteine synthesis pathway. The protein is Sulfate transporter CysZ of Escherichia coli (strain 55989 / EAEC).